The following is a 313-amino-acid chain: Small ribosomal subunit protein uS2 (313 aa).

Over residues 228 to 256 the composition is skewed to basic and acidic residues; it reads RQEDKAAEAQDKDAQDTEDNKGARPRGAE. Residues 228–313 form a disordered region; sequence RQEDKAAEAQ…VSKAGDKPKK (86 aa).

Belongs to the universal ribosomal protein uS2 family.

The sequence is that of Small ribosomal subunit protein uS2 from Amoebophilus asiaticus (strain 5a2).